The following is a 282-amino-acid chain: Elongation factor Ts (282 aa).

Residues 80 to 83 (TDFV) form an involved in Mg(2+) ion dislocation from EF-Tu region.

The protein belongs to the EF-Ts family.

The protein localises to the cytoplasm. In terms of biological role, associates with the EF-Tu.GDP complex and induces the exchange of GDP to GTP. It remains bound to the aminoacyl-tRNA.EF-Tu.GTP complex up to the GTP hydrolysis stage on the ribosome. The chain is Elongation factor Ts from Chlamydia felis (strain Fe/C-56) (Chlamydophila felis).